Consider the following 390-residue polypeptide: Transforming growth factor beta-1 proprotein (390 aa).

The first 29 residues, 1 to 29 (MPPSGLRLLPLLLPLLWLLVLTPGRPAAG), serve as a signal peptide directing secretion. The interval 30–74 (LSTCKTIDMELVKRKRIEAIRGQILSKLRLASPPSQGEVPPGPLP) is straightjacket domain. Residues 75–271 (EAVLALYNST…ATPLERAQHL (197 aa)) form an arm domain region. Residues asparagine 82, asparagine 136, and asparagine 176 are each glycosylated (N-linked (GlcNAc...) asparagine). The tract at residues 226 to 252 (DSRDNTLQVDINGFTTGRRGDLATIHG) is bowtie tail. The Cell attachment site motif lies at 244-246 (RGD). Intrachain disulfides connect cysteine 285/cysteine 294, cysteine 293/cysteine 356, cysteine 322/cysteine 387, and cysteine 326/cysteine 389.

It belongs to the TGF-beta family. Homodimer; disulfide-linked. Interacts with the serine proteases, HTRA1 and HTRA3: the interaction with either inhibits TGFB1-mediated signaling and the HTRA protease activity is required for this inhibition. May interact with THSD4; this interaction may lead to sequestration by FBN1 microfibril assembly and attenuation of TGFB signaling. Interacts with CD109, DPT and ASPN. Interacts with EFEMP2. Interacts with TSKU; the interaction contributes to regulation of the hair cycle. In terms of assembly, homodimer; disulfide-linked. Interacts with transforming growth factor beta-1 (TGF-beta-1) chain; interaction is non-covalent and maintains TGF-beta-1 in a latent state; each latency-associated peptide (LAP) monomer interacts with TGF-beta-1 in the other monomer. Interacts with LTBP1; leading to regulation of TGF-beta-1 activation. Interacts with LRRC32/GARP; leading to regulation of TGF-beta-1 activation on the surface of activated regulatory T-cells (Tregs). Interacts with LRRC33/NRROS; leading to regulation of TGF-beta-1 in macrophages and microglia. Interacts (via cell attachment site) with integrins ITGAV and ITGB6 (ITGAV:ITGB6), leading to release of the active TGF-beta-1. Interacts with NREP; the interaction results in a decrease in TGFB1 autoinduction. Interacts with HSP90AB1; inhibits latent TGFB1 activation. Interact with PSG9; leading to TGFB1 activation. Interacts with TGFBR3. As to quaternary structure, homodimer; disulfide-linked. Interacts with TGF-beta receptors (TGFBR1 and TGFBR2), leading to signal transduction. In terms of processing, transforming growth factor beta-1 proprotein: The precursor proprotein is cleaved in the Golgi apparatus by FURIN to form Transforming growth factor beta-1 (TGF-beta-1) and Latency-associated peptide (LAP) chains, which remain non-covalently linked, rendering TGF-beta-1 inactive. Post-translationally, N-glycosylated. Deglycosylation leads to activation of Transforming growth factor beta-1 (TGF-beta-1); mechanisms triggering deglycosylation-driven activation of TGF-beta-1 are however unclear. In terms of tissue distribution, highly expressed in bone. Abundantly expressed in articular cartilage and chondrocytes and is increased in osteoarthritis (OA). Colocalizes with ASPN in chondrocytes within OA lesions of articular cartilage.

It is found in the secreted. It localises to the extracellular space. Its subcellular location is the extracellular matrix. Transforming growth factor beta-1 proprotein: Precursor of the Latency-associated peptide (LAP) and Transforming growth factor beta-1 (TGF-beta-1) chains, which constitute the regulatory and active subunit of TGF-beta-1, respectively. In terms of biological role, required to maintain the Transforming growth factor beta-1 (TGF-beta-1) chain in a latent state during storage in extracellular matrix. Associates non-covalently with TGF-beta-1 and regulates its activation via interaction with 'milieu molecules', such as LTBP1, LRRC32/GARP and LRRC33/NRROS, that control activation of TGF-beta-1. Interaction with LRRC33/NRROS regulates activation of TGF-beta-1 in macrophages and microglia. Interaction with LRRC32/GARP controls activation of TGF-beta-1 on the surface of activated regulatory T-cells (Tregs). Interaction with integrins (ITGAV:ITGB6 or ITGAV:ITGB8) results in distortion of the Latency-associated peptide chain and subsequent release of the active TGF-beta-1. Its function is as follows. Multifunctional protein that regulates the growth and differentiation of various cell types and is involved in various processes, such as normal development, immune function, microglia function and responses to neurodegeneration. Activation into mature form follows different steps: following cleavage of the proprotein in the Golgi apparatus, Latency-associated peptide (LAP) and Transforming growth factor beta-1 (TGF-beta-1) chains remain non-covalently linked rendering TGF-beta-1 inactive during storage in extracellular matrix. At the same time, LAP chain interacts with 'milieu molecules', such as LTBP1, LRRC32/GARP and LRRC33/NRROS that control activation of TGF-beta-1 and maintain it in a latent state during storage in extracellular milieus. TGF-beta-1 is released from LAP by integrins (ITGAV:ITGB6 or ITGAV:ITGB8): integrin-binding to LAP stabilizes an alternative conformation of the LAP bowtie tail and results in distortion of the LAP chain and subsequent release of the active TGF-beta-1. Once activated following release of LAP, TGF-beta-1 acts by binding to TGF-beta receptors (TGFBR1 and TGFBR2), which transduce signal. While expressed by many cells types, TGF-beta-1 only has a very localized range of action within cell environment thanks to fine regulation of its activation by Latency-associated peptide chain (LAP) and 'milieu molecules'. Plays an important role in bone remodeling: acts as a potent stimulator of osteoblastic bone formation, causing chemotaxis, proliferation and differentiation in committed osteoblasts. Can promote either T-helper 17 cells (Th17) or regulatory T-cells (Treg) lineage differentiation in a concentration-dependent manner. At high concentrations, leads to FOXP3-mediated suppression of RORC and down-regulation of IL-17 expression, favoring Treg cell development. At low concentrations in concert with IL-6 and IL-21, leads to expression of the IL-17 and IL-23 receptors, favoring differentiation to Th17 cells. Stimulates sustained production of collagen through the activation of CREB3L1 by regulated intramembrane proteolysis (RIP). Mediates SMAD2/3 activation by inducing its phosphorylation and subsequent translocation to the nucleus. Positively regulates odontoblastic differentiation in dental papilla cells, via promotion of IPO7-mediated translocation of phosphorylated SMAD2 to the nucleus and subsequent transcription of target genes. Can induce epithelial-to-mesenchymal transition (EMT) and cell migration in various cell types. This Homo sapiens (Human) protein is Transforming growth factor beta-1 proprotein.